Reading from the N-terminus, the 580-residue chain is Adenine deaminase (580 aa).

The protein belongs to the metallo-dependent hydrolases superfamily. Adenine deaminase family. It depends on Mn(2+) as a cofactor.

The enzyme catalyses adenine + H2O + H(+) = hypoxanthine + NH4(+). The sequence is that of Adenine deaminase from Listeria monocytogenes serovar 1/2a (strain ATCC BAA-679 / EGD-e).